A 345-amino-acid chain; its full sequence is Phosphoribosylformylglycinamidine cyclo-ligase (345 aa).

The protein belongs to the AIR synthase family.

The protein localises to the cytoplasm. The enzyme catalyses 2-formamido-N(1)-(5-O-phospho-beta-D-ribosyl)acetamidine + ATP = 5-amino-1-(5-phospho-beta-D-ribosyl)imidazole + ADP + phosphate + H(+). Its pathway is purine metabolism; IMP biosynthesis via de novo pathway; 5-amino-1-(5-phospho-D-ribosyl)imidazole from N(2)-formyl-N(1)-(5-phospho-D-ribosyl)glycinamide: step 2/2. The sequence is that of Phosphoribosylformylglycinamidine cyclo-ligase from Escherichia fergusonii (strain ATCC 35469 / DSM 13698 / CCUG 18766 / IAM 14443 / JCM 21226 / LMG 7866 / NBRC 102419 / NCTC 12128 / CDC 0568-73).